Reading from the N-terminus, the 994-residue chain is Phosphoenolpyruvate carboxylase (994 aa).

The tract at residues 1–67 (MKAVRSDKTT…GRTREDKDHP (67 aa)) is disordered. Composition is skewed to low complexity over residues 9–24 (TTQAATTAQAQKPAKA) and 34–57 (AAPQAANASARQPASAQAPAPKAN). Active-site residues include H204 and K646.

Belongs to the PEPCase type 1 family. Mg(2+) serves as cofactor.

It catalyses the reaction oxaloacetate + phosphate = phosphoenolpyruvate + hydrogencarbonate. In terms of biological role, forms oxaloacetate, a four-carbon dicarboxylic acid source for the tricarboxylic acid cycle. This Paraburkholderia xenovorans (strain LB400) protein is Phosphoenolpyruvate carboxylase.